The following is a 224-amino-acid chain: Phosphoglycolate phosphatase (224 aa).

The active-site Nucleophile is the Asp-11. Positions 11, 13, and 177 each coordinate Mg(2+).

The protein belongs to the HAD-like hydrolase superfamily. CbbY/CbbZ/Gph/YieH family. Mg(2+) serves as cofactor.

The catalysed reaction is 2-phosphoglycolate + H2O = glycolate + phosphate. Its pathway is organic acid metabolism; glycolate biosynthesis; glycolate from 2-phosphoglycolate: step 1/1. Specifically catalyzes the dephosphorylation of 2-phosphoglycolate. Is involved in the dissimilation of the intracellular 2-phosphoglycolate formed during the DNA repair of 3'-phosphoglycolate ends, a major class of DNA lesions induced by oxidative stress. The protein is Phosphoglycolate phosphatase of Haemophilus influenzae (strain ATCC 51907 / DSM 11121 / KW20 / Rd).